The following is a 319-amino-acid chain: Acetyl-coenzyme A carboxylase carboxyl transferase subunit alpha (319 aa).

Residues 35–296 (NIDEEVHRLR…KAQLLEDLAD (262 aa)) form the CoA carboxyltransferase C-terminal domain.

This sequence belongs to the AccA family. As to quaternary structure, acetyl-CoA carboxylase is a heterohexamer composed of biotin carboxyl carrier protein (AccB), biotin carboxylase (AccC) and two subunits each of ACCase subunit alpha (AccA) and ACCase subunit beta (AccD).

The protein resides in the cytoplasm. It catalyses the reaction N(6)-carboxybiotinyl-L-lysyl-[protein] + acetyl-CoA = N(6)-biotinyl-L-lysyl-[protein] + malonyl-CoA. Its pathway is lipid metabolism; malonyl-CoA biosynthesis; malonyl-CoA from acetyl-CoA: step 1/1. Functionally, component of the acetyl coenzyme A carboxylase (ACC) complex. First, biotin carboxylase catalyzes the carboxylation of biotin on its carrier protein (BCCP) and then the CO(2) group is transferred by the carboxyltransferase to acetyl-CoA to form malonyl-CoA. The polypeptide is Acetyl-coenzyme A carboxylase carboxyl transferase subunit alpha (Salmonella dublin (strain CT_02021853)).